Reading from the N-terminus, the 493-residue chain is Voltage-gated potassium channel regulatory subunit KCNF1 (493 aa).

Topologically, residues 1–183 are cytoplasmic; that stretch reads MDASAEQSLP…KPESSCPARV (183 aa). A helical transmembrane segment spans residues 184-204; it reads VAVLSFLLILVSSVVMCMGTI. Residues 205–223 are Extracellular-facing; it reads PELQVVDSEGNRVEHPTLE. A helical transmembrane segment spans residues 224-244; that stretch reads NVETACIGWFTLEYLLRLFSS. Topologically, residues 245 to 249 are cytoplasmic; it reads PNKLH. The helical transmembrane segment at 250 to 270 threads the bilayer; the sequence is FALSFMNIVDVLAILPFYVSL. At 271-289 the chain is on the extracellular side; sequence TLTHLGARMMELTNVQQAV. Residues 290-310 traverse the membrane as a helical; Voltage-sensor segment; that stretch reads QALRIMRIARIFKLARHSSGL. The Cytoplasmic segment spans residues 311-324; that stretch reads QTLTYALKRSFKEL. The helical transmembrane segment at 325–345 threads the bilayer; sequence GLLLMYLAVGIFVFSALGYTM. Residues 346–357 are Extracellular-facing; the sequence is EQSHPETLFKSI. The pore-forming intramembrane region spans 358-378; sequence PQSFWWAIITMTTVGYGDIYP. The short motif at 370–375 is the Selectivity filter element; it reads TVGYGD. The Extracellular segment spans residues 379–385; the sequence is KTTLGKL. A helical membrane pass occupies residues 386-406; that stretch reads NAAISFLCGVIAIALPIHPII. The Cytoplasmic segment spans residues 407 to 493; it reads NNFVRYYNKQ…HHRTRLQSCK (87 aa). Residues 433-468 are disordered; that stretch reads NSSSAESKPGGSRSDLDTLPPEPAAREGPSWGSRLK.

Belongs to the potassium channel family. F (TC 1.A.1.2) subfamily. Kv5.1/KCNF1 sub-subfamily. In terms of assembly, heterotetramer with KCNB1 or KCNB2. Expressed in brain namely in the piriform cortex, olfactory tubercle, and medial habenular nucleus. Also expressed in the medial amygdaloid nuclei and the lateral amygdaloid area.

The protein resides in the cell membrane. Regulatory alpha-subunit of the voltage-gated potassium (Kv) channel which, when coassembled with KCNB1 or KCNB2, can modulate their expression and their gating kinetics by acting on deactivation upon repolarization and inactivation during maintained depolarization. Accelerates inactivation but has relatively little effect on deactivation. Coexpression with KCNB1 or KCNB2 markedly slows inactivation. Each modulatory subunit has its own specific properties of regulation, and can lead to extensive inhibitions, to large changes in kinetics, and/or to large shifts in the voltage dependencies of the inactivation process. The gating kinetics depends on the nature and stoichiometry of the associated regulatory sunbunit. Fails to produce a potassium current when expressed alone. This is Voltage-gated potassium channel regulatory subunit KCNF1 from Rattus norvegicus (Rat).